We begin with the raw amino-acid sequence, 419 residues long: Indole prenyltransferase tdiB (419 aa).

58–59 (PS) provides a ligand contact to L-tryptophan. Substrate-binding residues include Arg81, Lys165, Tyr167, Arg236, Lys238, Tyr240, Tyr330, and Tyr394.

It belongs to the tryptophan dimethylallyltransferase family.

It carries out the reaction didemethylasterriquinone D + dimethylallyl diphosphate = asterriquinone C1 + diphosphate. The protein operates within secondary metabolite biosynthesis. In terms of biological role, indole prenyltransferase; part of the gene cluster that mediates the biosynthesis of terrequinone A, an antitumor agent. The first step in the biosynthetic pathway for terrequinone A is formation of indole pyruvic acid (IPA) from L-tryptophan by the aminotransferase tdiD. The nonribosomal peptide synthase tdiA then immediately converts unstable IPA to didemethylasterriquinone D (DDAQ D), via condensation of 2 IPA molecules. The symmetric connectivity of the 2 IPA molecules is thought to arise by head-to-tail dual Claisen condensations facilitated by the TE domain. TdiB then catalyzes reverse prenylation by transferring dimethylallyl diphosphate to carbon atom 2' of DDAQ D, to yield asterriquinone C-1. Finally, tdiC and tdiE enzymes robustly convert asterriquinone C-1 to terrequinone A via a transformation involving regular prenylation at carbon atom 5, which requires elimination of the hydroxy group on C-5. In Emericella nidulans (strain FGSC A4 / ATCC 38163 / CBS 112.46 / NRRL 194 / M139) (Aspergillus nidulans), this protein is Indole prenyltransferase tdiB.